We begin with the raw amino-acid sequence, 394 residues long: 2-oxoglutarate and iron-dependent oxygenase domain-containing protein CP2 (394 aa).

The tract at residues 1-35 (MSSEQREGSQETTTTTVEGNGTIAGQNSHSAAPTT) is disordered. Polar residues predominate over residues 17–35 (VEGNGTIAGQNSHSAAPTT). The 100-residue stretch at 248–347 (DSHHGFVVEY…RVNMLLWCRS (100 aa)) folds into the Fe2OG dioxygenase domain. His268, Asp270, and His328 together coordinate Fe cation. Arg338 lines the 2-oxoglutarate pocket.

Fe(2+) is required as a cofactor. The cofactor is L-ascorbate. Expressed in roots, cotyledons, rosette leaves, cauline leaves, inflorescences and siliques.

It localises to the nucleus. The protein localises to the nucleoplasm. Functionally, participates in the epigenetic repression of flowering genes in association with ICU11. Functions in the repression of several members of the MADS-box transcription factors family, including SEP3, during vegetative development via histone modification. This chain is 2-oxoglutarate and iron-dependent oxygenase domain-containing protein CP2, found in Arabidopsis thaliana (Mouse-ear cress).